A 144-amino-acid chain; its full sequence is Deoxyuridine 5'-triphosphate nucleotidohydrolase (144 aa).

Substrate is bound by residues 63–65 (RSG), Asn76, and 80–82 (TID).

Belongs to the dUTPase family. Mg(2+) serves as cofactor.

It carries out the reaction dUTP + H2O = dUMP + diphosphate + H(+). Its pathway is pyrimidine metabolism; dUMP biosynthesis; dUMP from dCTP (dUTP route): step 2/2. In terms of biological role, this enzyme is involved in nucleotide metabolism: it produces dUMP, the immediate precursor of thymidine nucleotides and it decreases the intracellular concentration of dUTP so that uracil cannot be incorporated into DNA. This chain is Deoxyuridine 5'-triphosphate nucleotidohydrolase, found in Bacteroides fragilis (strain YCH46).